Consider the following 482-residue polypeptide: Glycogen synthase 2 (482 aa).

Lys-18 contributes to the ADP-alpha-D-glucose binding site.

Belongs to the glycosyltransferase 1 family. Bacterial/plant glycogen synthase subfamily.

The catalysed reaction is [(1-&gt;4)-alpha-D-glucosyl](n) + ADP-alpha-D-glucose = [(1-&gt;4)-alpha-D-glucosyl](n+1) + ADP + H(+). The protein operates within glycan biosynthesis; glycogen biosynthesis. In terms of biological role, synthesizes alpha-1,4-glucan chains using ADP-glucose. The chain is Glycogen synthase 2 from Bradyrhizobium diazoefficiens (strain JCM 10833 / BCRC 13528 / IAM 13628 / NBRC 14792 / USDA 110).